Here is a 181-residue protein sequence, read N- to C-terminus: MSLRSAFALLPLFLLLIVANVESRKDVGEYWKLVMKDQDMPEEIQGLLDASNIKNSKTHAKENMGAIGEFEPRPYASAYGDNEIHAKENMGAIGEFEPRPNASAYGDNEIHANENKGASGEFEPRPNISAYGDNEIHANENKGAIGEFETRPNASAYGDNEIGAEFTDDFEPRPSMTKYNA.

A run of 4 repeats spans residues histidine 59–isoleucine 84, histidine 85–isoleucine 110, histidine 111–isoleucine 136, and histidine 137–isoleucine 162. The segment at histidine 59–isoleucine 162 is 4 X 26 AA tandem repeats. The interval glycine 94–alanine 181 is disordered.

To organ specific protein P4. In terms of tissue distribution, expressed in stems.

The chain is Organ-specific protein S2 from Pisum sativum (Garden pea).